The chain runs to 545 residues: Membrane protein insertase YidC (545 aa).

The next 6 helical transmembrane spans lie at 10–30 (AIYL…IFFS), 319–339 (LLYF…NVIP), 341–361 (WGLS…PLTF), 407–427 (LGGC…YGLV), 467–487 (ILPF…SNVS), and 502–522 (MPIM…IYWI).

Belongs to the OXA1/ALB3/YidC family. Type 1 subfamily. In terms of assembly, interacts with the Sec translocase complex via SecD. Specifically interacts with transmembrane segments of nascent integral membrane proteins during membrane integration.

The protein localises to the cell inner membrane. Its function is as follows. Required for the insertion and/or proper folding and/or complex formation of integral membrane proteins into the membrane. Involved in integration of membrane proteins that insert both dependently and independently of the Sec translocase complex, as well as at least some lipoproteins. Aids folding of multispanning membrane proteins. This chain is Membrane protein insertase YidC, found in Borrelia hermsii (strain HS1 / DAH).